The following is a 343-amino-acid chain: Tetraacyldisaccharide 4'-kinase (343 aa).

47–54 lines the ATP pocket; it reads SVGGTGKT.

It belongs to the LpxK family.

It catalyses the reaction a lipid A disaccharide + ATP = a lipid IVA + ADP + H(+). It participates in glycolipid biosynthesis; lipid IV(A) biosynthesis; lipid IV(A) from (3R)-3-hydroxytetradecanoyl-[acyl-carrier-protein] and UDP-N-acetyl-alpha-D-glucosamine: step 6/6. Functionally, transfers the gamma-phosphate of ATP to the 4'-position of a tetraacyldisaccharide 1-phosphate intermediate (termed DS-1-P) to form tetraacyldisaccharide 1,4'-bis-phosphate (lipid IVA). The chain is Tetraacyldisaccharide 4'-kinase from Flavobacterium psychrophilum (strain ATCC 49511 / DSM 21280 / CIP 103535 / JIP02/86).